Consider the following 273-residue polypeptide: Large ribosomal subunit protein uL2cz/uL2cy (273 aa).

Disordered regions lie at residues 1–20 (MAKH…TIDR) and 225–273 (PVDH…RRRK).

The protein belongs to the universal ribosomal protein uL2 family. Part of the 50S ribosomal subunit.

It localises to the plastid. The protein resides in the chloroplast. The chain is Large ribosomal subunit protein uL2cz/uL2cy (rpl2-A) from Oryza nivara (Indian wild rice).